Here is an 810-residue protein sequence, read N- to C-terminus: Fibroblast growth factor receptor 1-A (810 aa).

Residues 1–26 (MKMMMIMKTTLLLISVLLTQALQSQG) form the signal peptide. The Extracellular segment spans residues 27–363 (RPAIQDEAPA…TQLPNQTYLE (337 aa)). 3 consecutive Ig-like C2-type domains span residues 28–115 (PAIQ…FNIS), 147–235 (PDKM…YQLD), and 244–346 (PILQ…AWLT). C53 and C99 are disulfide-bonded. 9 N-linked (GlcNAc...) asparagine glycosylation sites follow: N107, N113, N216, N229, N253, N285, N306, N319, and N358. C167 and C219 form a disulfide bridge. C266 and C330 are joined by a disulfide. Residues 364 to 384 (VLIYCVGFFLICVMVGTAVLA) form a helical membrane-spanning segment. The Cytoplasmic portion of the chain corresponds to 385–810 (KMHSSAKKSD…PNRGVAFKKR (426 aa)). Residue Y450 is modified to Phosphotyrosine; by autocatalysis. The Protein kinase domain maps to 465 to 754 (LVLGKPLGEG…LSMTSNQEYL (290 aa)). Residues 471-477 (LGEGCFG), K501, 549-551 (EFA), and N555 contribute to the ATP site. Phosphotyrosine; by autocatalysis occurs at positions 570 and 572. Catalysis depends on D610, which acts as the Proton acceptor. The ATP site is built by R614 and D628. 4 positions are modified to phosphotyrosine; by autocatalysis: Y640, Y641, Y717, and Y753. Residues 787–810 (AGADEPCLPKFPPHPNRGVAFKKR) are disordered.

It belongs to the protein kinase superfamily. Tyr protein kinase family. Fibroblast growth factor receptor subfamily. Monomer. Homodimer after ligand binding. Interacts with cnpy1. Autophosphorylated. Binding of FGF family members together with heparan sulfate proteoglycan or heparin promotes receptor dimerization and autophosphorylation on tyrosine residues. Autophosphorylation occurs in trans between the two FGFR molecules present in the dimer and proceeds in a highly ordered manner. Phosphotyrosine residues provide docking sites for interacting proteins and so are crucial for FGFR1 function and its regulation. Post-translationally, ubiquitinated. FGFR1 is rapidly ubiquitinated after autophosphorylation, leading to internalization and degradation. In terms of processing, N-glycosylated in the endoplasmic reticulum. The N-glycan chains undergo further maturation to an Endo H-resistant form in the Golgi apparatus. Initially expressed in adaxial mesoderm with transcripts distinctly localized to the anterior portion of each half-somite. Hereupon, also strongly expressed in the otic vesicles, branchial arches and the brain, especially at the midbrain-hindbrain boundary (MHB).

It localises to the cell membrane. The protein localises to the nucleus. The protein resides in the cytoplasm. It is found in the cytosol. Its subcellular location is the cytoplasmic vesicle. The catalysed reaction is L-tyrosyl-[protein] + ATP = O-phospho-L-tyrosyl-[protein] + ADP + H(+). Present in an inactive conformation in the absence of bound ligand. Ligand binding leads to dimerization and activation by sequential autophosphorylation on tyrosine residues. Its function is as follows. Tyrosine-protein kinase that acts as a cell-surface receptor for fibroblast growth factors and plays an essential role in the regulation of embryonic development, cell proliferation, differentiation and migration. Required for normal mesoderm patterning and normal skeletogenesis. Phosphorylates PLCG1, FRS2, GAB1 and SHB. Ligand binding leads to the activation of several signaling cascades. Activation of PLCG1 leads to the production of the cellular signaling molecules diacylglycerol and inositol-1,4,5-trisphosphate. Phosphorylation of FRS2 triggers recruitment of GRB2, GAB1, PIK3R1 and SOS1, and mediates activation of RAS, MAPK1/ERK2, MAPK3/ERK1 and the MAP kinase signaling pathway, as well as of the AKT1 signaling pathway. Promotes phosphorylation of SHC1, STAT1 and PTPN11/SHP2. In the nucleus, enhances RPS6KA1 and CREB1 activity and contributes to the regulation of transcription. FGFR1 signaling is down-regulated by ubiquitination, internalization and degradation. The polypeptide is Fibroblast growth factor receptor 1-A (fgfr1a) (Danio rerio (Zebrafish)).